The following is a 140-amino-acid chain: ATP synthase epsilon chain (140 aa).

Belongs to the ATPase epsilon chain family. F-type ATPases have 2 components, CF(1) - the catalytic core - and CF(0) - the membrane proton channel. CF(1) has five subunits: alpha(3), beta(3), gamma(1), delta(1), epsilon(1). CF(0) has three main subunits: a, b and c.

It localises to the cell inner membrane. Functionally, produces ATP from ADP in the presence of a proton gradient across the membrane. This is ATP synthase epsilon chain from Bdellovibrio bacteriovorus (strain ATCC 15356 / DSM 50701 / NCIMB 9529 / HD100).